The chain runs to 348 residues: Selenide, water dikinase (348 aa).

C17 is an active-site residue. ATP-binding positions include K20 and 47 to 49; that span reads RAD. D50 lines the Mg(2+) pocket. ATP is bound by residues D67, D90, and 138–140; that span reads GHT. D90 is a binding site for Mg(2+). D226 is a Mg(2+) binding site.

Belongs to the selenophosphate synthase 1 family. Class I subfamily. Homodimer. Requires Mg(2+) as cofactor.

It catalyses the reaction hydrogenselenide + ATP + H2O = selenophosphate + AMP + phosphate + 2 H(+). Functionally, synthesizes selenophosphate from selenide and ATP. The sequence is that of Selenide, water dikinase from Pelobacter propionicus (strain DSM 2379 / NBRC 103807 / OttBd1).